Consider the following 224-residue polypeptide: CMRF35-like molecule 6 (224 aa).

An N-terminal signal peptide occupies residues 1-20 (MTARAWASWRSSALLLLLVP). Residues 21–183 (GYFPLSHPMT…HPGSLFSNVR (163 aa)) are Extracellular-facing. Residues 22 to 130 (YFPLSHPMTV…HDPIVEVEVS (109 aa)) enclose the Ig-like V-type domain. Intrachain disulfides connect C43–C110 and C57–C65. N-linked (GlcNAc...) asparagine glycosylation is found at N90 and N99. Polar residues predominate over residues 136–151 (TTTASSPQSSMGTSGP). Positions 136-174 (TTTASSPQSSMGTSGPPTKLPVHTWPSVTRKDSPEPSPH) are disordered. A helical membrane pass occupies residues 184 to 204 (FLLLVLLELPLLLSMLGAVLW). The Cytoplasmic segment spans residues 205 to 224 (VNRPQRSSRSRQNWPKGENQ).

The protein belongs to the CD300 family. As to expression, present on the surface of monocytes, neutrophils, a proportion of peripheral blood T- and B-lymphocytes and lymphocytic cell lines.

It localises to the cell membrane. The chain is CMRF35-like molecule 6 (CD300C) from Homo sapiens (Human).